A 635-amino-acid polypeptide reads, in one-letter code: Extracellular metalloproteinase 1 (635 aa).

Positions 1–19 are cleaved as a signal peptide; that stretch reads MHGLLLAAGLLSLPLHVLA. A propeptide spanning residues 20 to 246 is cleaved from the precursor; that stretch reads HPQPSTSTSL…VHNVVDYVAH (227 aa). N-linked (GlcNAc...) asparagine glycosylation occurs at Asn287. His430 is a Zn(2+) binding site. The active site involves Glu431. Position 434 (His434) interacts with Zn(2+). 3 N-linked (GlcNAc...) asparagine glycosylation sites follow: Asn475, Asn594, and Asn623.

This sequence belongs to the peptidase M36 family. Zn(2+) serves as cofactor.

It is found in the secreted. Secreted metalloproteinase probably acting as a virulence factor. This chain is Extracellular metalloproteinase 1 (MEP1), found in Trichophyton tonsurans (Scalp ringworm fungus).